Consider the following 33-residue polypeptide: Non-specific lipid-transfer protein (33 aa).

Residues cysteine 14 and cysteine 29 are joined by a disulfide bond.

The protein belongs to the plant LTP family. Dimer.

Plant non-specific lipid-transfer proteins transfer phospholipids as well as galactolipids across membranes. May play a role in wax or cutin deposition in the cell walls of expanding epidermal cells and certain secretory tissues. Has antibacterial activity against Gram-positive bacteria S.aureus and S.epidermidis and blocks biofilm formation. In a mouse model, also protects against bacterial sepsis and has an anti-inflammatory effect. Exhibits antinociceptive activity upon oral or intraperitoneal application in mice. This chain is Non-specific lipid-transfer protein, found in Morinda citrifolia (Indian mulberry).